Reading from the N-terminus, the 161-residue chain is Regulator of ribonuclease activity A (161 aa).

The protein belongs to the RraA family. As to quaternary structure, homotrimer. Binds to both RNA-binding sites in the C-terminal region of Rne and to RhlB.

The protein resides in the cytoplasm. Globally modulates RNA abundance by binding to RNase E (Rne) and regulating its endonucleolytic activity. Can modulate Rne action in a substrate-dependent manner by altering the composition of the degradosome. Modulates RNA-binding and helicase activities of the degradosome. In Edwardsiella ictaluri (strain 93-146), this protein is Regulator of ribonuclease activity A.